The chain runs to 265 residues: HUWE1-associated protein modifying stress responses (265 aa).

3 disordered regions span residues Met-1 to Ser-22, Gly-140 to Thr-173, and Ile-194 to Gly-219. Low complexity predominate over residues Ser-147–Glu-172.

This sequence belongs to the HAPSTR1 family. As to quaternary structure, oligomer.

The protein resides in the nucleus. The protein localises to the cytoplasm. Its function is as follows. Acts as a central player within a network of stress response pathways promoting cellular adaptability. Functions as a negative regulator of TP53/P53 in the cellular response to telomere erosion and probably also DNA damage. This Danio rerio (Zebrafish) protein is HUWE1-associated protein modifying stress responses.